We begin with the raw amino-acid sequence, 696 residues long: Polyribonucleotide nucleotidyltransferase (696 aa).

2 residues coordinate Mg(2+): Asp489 and Asp495. Residues 556–615 (PQYVTMKINPEKIRDVIGKGGVVIREITEATNCAIDISDDGTIKIAAHTTEEGEAAKRRI) enclose the KH domain. The S1 motif domain maps to 625 to 693 (GKVYEGTVVK…RQGRVRLSMK (69 aa)).

Belongs to the polyribonucleotide nucleotidyltransferase family. In terms of assembly, component of the RNA degradosome, which is a multiprotein complex involved in RNA processing and mRNA degradation. Mg(2+) is required as a cofactor.

The protein localises to the cytoplasm. The catalysed reaction is RNA(n+1) + phosphate = RNA(n) + a ribonucleoside 5'-diphosphate. In terms of biological role, involved in mRNA degradation. Catalyzes the phosphorolysis of single-stranded polyribonucleotides processively in the 3'- to 5'-direction. This chain is Polyribonucleotide nucleotidyltransferase, found in Coxiella burnetii (strain CbuG_Q212) (Coxiella burnetii (strain Q212)).